The sequence spans 156 residues: Small ribosomal subunit protein uS7 (156 aa).

Belongs to the universal ribosomal protein uS7 family. As to quaternary structure, part of the 30S ribosomal subunit. Contacts proteins S9 and S11.

One of the primary rRNA binding proteins, it binds directly to 16S rRNA where it nucleates assembly of the head domain of the 30S subunit. Is located at the subunit interface close to the decoding center, probably blocks exit of the E-site tRNA. In Picosynechococcus sp. (strain ATCC 27264 / PCC 7002 / PR-6) (Agmenellum quadruplicatum), this protein is Small ribosomal subunit protein uS7.